The primary structure comprises 102 residues: Large ribosomal subunit protein uL24 (102 aa).

The protein belongs to the universal ribosomal protein uL24 family. As to quaternary structure, part of the 50S ribosomal subunit.

Functionally, one of two assembly initiator proteins, it binds directly to the 5'-end of the 23S rRNA, where it nucleates assembly of the 50S subunit. In terms of biological role, one of the proteins that surrounds the polypeptide exit tunnel on the outside of the subunit. This is Large ribosomal subunit protein uL24 from Ralstonia nicotianae (strain ATCC BAA-1114 / GMI1000) (Ralstonia solanacearum).